A 571-amino-acid chain; its full sequence is Proline--tRNA ligase 1 (571 aa).

Belongs to the class-II aminoacyl-tRNA synthetase family. ProS type 1 subfamily. In terms of assembly, homodimer.

It localises to the cytoplasm. The catalysed reaction is tRNA(Pro) + L-proline + ATP = L-prolyl-tRNA(Pro) + AMP + diphosphate. In terms of biological role, catalyzes the attachment of proline to tRNA(Pro) in a two-step reaction: proline is first activated by ATP to form Pro-AMP and then transferred to the acceptor end of tRNA(Pro). As ProRS can inadvertently accommodate and process non-cognate amino acids such as alanine and cysteine, to avoid such errors it has two additional distinct editing activities against alanine. One activity is designated as 'pretransfer' editing and involves the tRNA(Pro)-independent hydrolysis of activated Ala-AMP. The other activity is designated 'posttransfer' editing and involves deacylation of mischarged Ala-tRNA(Pro). The misacylated Cys-tRNA(Pro) is not edited by ProRS. This Clostridioides difficile (strain 630) (Peptoclostridium difficile) protein is Proline--tRNA ligase 1.